A 191-amino-acid chain; its full sequence is Probable nicotinate-nucleotide adenylyltransferase (191 aa).

Belongs to the NadD family.

It carries out the reaction nicotinate beta-D-ribonucleotide + ATP + H(+) = deamido-NAD(+) + diphosphate. It functions in the pathway cofactor biosynthesis; NAD(+) biosynthesis; deamido-NAD(+) from nicotinate D-ribonucleotide: step 1/1. Functionally, catalyzes the reversible adenylation of nicotinate mononucleotide (NaMN) to nicotinic acid adenine dinucleotide (NaAD). The polypeptide is Probable nicotinate-nucleotide adenylyltransferase (Staphylococcus epidermidis (strain ATCC 12228 / FDA PCI 1200)).